Here is a 503-residue protein sequence, read N- to C-terminus: Betaine aldehyde dehydrogenase 2 (503 aa).

Position 161-170 (Trp161–Trp170) interacts with betaine aldehyde. Gly238–Gly243 contacts NAD(+). Betaine aldehyde contacts are provided by residues Glu260, Gln292–Ser295, and Cys453. Active-site residues include Glu260 and Cys294. Residues Glu260–Leu261 and Cys294 each bind 4-aminobutanal. Residue Trp459 participates in 4-aminobutanal binding. A Microbody targeting signal motif is present at residues Ser501–Leu503.

The protein belongs to the aldehyde dehydrogenase family. As to quaternary structure, homodimer.

The protein resides in the peroxisome. Its subcellular location is the cytoplasm. It carries out the reaction betaine aldehyde + NAD(+) + H2O = glycine betaine + NADH + 2 H(+). It participates in amine and polyamine biosynthesis; betaine biosynthesis via choline pathway; betaine from betaine aldehyde: step 1/1. Functionally, dehydrogenase that can use N-acetyl-c-aminobutyraldehyde (NAGABald), gamma-guanidinobutyraldehyde (GGBald), betaine aldehyde (Bet-ald), gamma-aminobutyraldehyde (GAB-ald), acetaldehyde, 4-aminobutylaldehyde (AB-ald), 3-aminopropionaldehyde (AP-ald), 4-N-trimethylaminobutyraldehyde (TMAB-ald) and 3-N-trimethylaminopropionaldehyde (TMAP-ald) as substrates. Catalyzes the oxidation of GAB-ald more efficiently than Bet-ald. Mediates the conversion of GAB-ald into gamma-aminobutyric acid (GABA), and prevents the formation of 2-acetyl-1-pyrroline (2AP) which gives fragrant rice its aromatic properties. The sequence is that of Betaine aldehyde dehydrogenase 2 (BADH2) from Oryza sativa subsp. indica (Rice).